The sequence spans 666 residues: Long-chain-fatty-acid--CoA ligase ACSBG2 (666 aa).

ATP-binding positions include 230–238 (TSGTTGIPK), 418–423 (ELYGLS), D496, and R624.

This sequence belongs to the ATP-dependent AMP-binding enzyme family. Bubblegum subfamily. As to expression, testis-specific.

Its subcellular location is the cytoplasm. It localises to the membrane. It carries out the reaction a long-chain fatty acid + ATP + CoA = a long-chain fatty acyl-CoA + AMP + diphosphate. It catalyses the reaction (5Z,8Z,11Z,14Z)-eicosatetraenoate + ATP + CoA = (5Z,8Z,11Z,14Z)-eicosatetraenoyl-CoA + AMP + diphosphate. The enzyme catalyses hexadecanoate + ATP + CoA = hexadecanoyl-CoA + AMP + diphosphate. The catalysed reaction is (9Z)-octadecenoate + ATP + CoA = (9Z)-octadecenoyl-CoA + AMP + diphosphate. It carries out the reaction (9Z,12Z)-octadecadienoate + ATP + CoA = (9Z,12Z)-octadecadienoyl-CoA + AMP + diphosphate. It catalyses the reaction tetracosanoate + ATP + CoA = tetracosanoyl-CoA + AMP + diphosphate. Functionally, catalyzes the conversion of fatty acids such as long chain and very long-chain fatty acids to their active form acyl-CoAs for both synthesis of cellular lipids, and degradation via beta-oxidation. Can activate diverse saturated, monosaturated and polyunsaturated fatty acids. Has increased ability to activate oleic and linoleic acid. May play a role in spermatogenesis. The protein is Long-chain-fatty-acid--CoA ligase ACSBG2 of Homo sapiens (Human).